The sequence spans 246 residues: Acetoacetate decarboxylase (246 aa).

The active-site Schiff-base intermediate with acetoacetate is K116.

The protein belongs to the ADC family.

The enzyme catalyses acetoacetate + H(+) = acetone + CO2. In terms of biological role, catalyzes the conversion of acetoacetate to acetone and carbon dioxide. This chain is Acetoacetate decarboxylase, found in Clostridium botulinum (strain Eklund 17B / Type B).